Consider the following 294-residue polypeptide: Lipoprotein NlpI (294 aa).

The first 18 residues, 1-18 (MKPFLRWCFVATALTLAG), serve as a signal peptide directing secretion. Cysteine 19 is lipidated: N-palmitoyl cysteine. Cysteine 19 carries S-diacylglycerol cysteine lipidation. TPR repeat units lie at residues 62–95 (AQLLYERGVLYDSLGLRALARNDFSQALAIRPDM), 96–129 (PEVFNYLGIYLTQAGNFDAAYEAFDSVLELDPTY), and 234–267 (SETNFYLGKYYLSLGDLDSATALFKLAVANNVHN).

Homodimer.

The protein resides in the cell membrane. In terms of biological role, may be involved in cell division. May play a role in bacterial septation or regulation of cell wall degradation during cell division. This is Lipoprotein NlpI (nlpI) from Escherichia coli O157:H7.